Here is a 902-residue protein sequence, read N- to C-terminus: Glycogen phosphorylase (902 aa).

The tract at residues 1 to 21 is disordered; sequence MPPASTSTTNDMITEEPTSPH. A Phosphothreonine modification is found at Thr31. Position 333 is a phosphoserine (Ser333). At Lys751 the chain carries N6-(pyridoxal phosphate)lysine.

The protein belongs to the glycogen phosphorylase family. In terms of assembly, homodimer. Requires pyridoxal 5'-phosphate as cofactor.

Its subcellular location is the cytoplasm. The protein localises to the cytosol. The catalysed reaction is [(1-&gt;4)-alpha-D-glucosyl](n) + phosphate = [(1-&gt;4)-alpha-D-glucosyl](n-1) + alpha-D-glucose 1-phosphate. Activated by phosphorylation of Thr-31. In terms of biological role, phosphorylase is an important allosteric enzyme in carbohydrate metabolism. Enzymes from different sources differ in their regulatory mechanisms and in their natural substrates. However, all known phosphorylases share catalytic and structural properties. The sequence is that of Glycogen phosphorylase (GPH1) from Saccharomyces cerevisiae (strain ATCC 204508 / S288c) (Baker's yeast).